Consider the following 400-residue polypeptide: Elongation factor Tu 2 (400 aa).

The tr-type G domain occupies 10 to 209 (KPHVNIGTIG…KVDEYIPTPQ (200 aa)). The segment at 19-26 (GHVDHGKT) is G1. Residue 19–26 (GHVDHGKT) participates in GTP binding. Threonine 26 is a Mg(2+) binding site. Positions 60–64 (GITIN) are G2. The tract at residues 81–84 (DCPG) is G3. GTP contacts are provided by residues 81–85 (DCPGH) and 136–139 (NKAD). Residues 136–139 (NKAD) are G4. The G5 stretch occupies residues 174–176 (SAL).

Belongs to the TRAFAC class translation factor GTPase superfamily. Classic translation factor GTPase family. EF-Tu/EF-1A subfamily. Monomer.

The protein resides in the cytoplasm. The enzyme catalyses GTP + H2O = GDP + phosphate + H(+). Its function is as follows. GTP hydrolase that promotes the GTP-dependent binding of aminoacyl-tRNA to the A-site of ribosomes during protein biosynthesis. This Carboxydothermus hydrogenoformans (strain ATCC BAA-161 / DSM 6008 / Z-2901) protein is Elongation factor Tu 2.